The sequence spans 468 residues: MSSGKIAQVIGPVVDVLFAAGEKLPEINNALVVYKNDERKTKIVLEVALELGDGMVRTIAMESTDGLTRGMEVLDTGRPISVPVGKETLGRVFNVLGDTIDLEAPFTEDAERQPIHKKAPTFDELSTSSEILETGIKVIDLLAPYLKGGKVGLFGGAGVGKTVLIQELIHNIAQEHGGISVFTGVGERTREGNDLYWEMKESGVIEKTAMVFGQMNEPPGARMRVALTGLTIAEYFRDVEGQDVLLFIDNIFRFTQAGSEVSALLGRMPSAVGYQPTLATEMGQLQERITSTKKGSVTSIQAIYVPADDYTDPAPATAFAHLDSTTNLERKLVQLGIYPAVDPLASSSRALAPEIVGEEHYAVAAEVKRVLQRYHELQDIIAILGMDELSDEEKTLVARARRIQFFLSQNXNVAEQFTGQPGSYVPVAETVRGFKEILDGKYDHLPEDAFRGVGSIEDVIAKAEKMGF.

155–162 (GGAGVGKT) provides a ligand contact to ATP.

This sequence belongs to the ATPase alpha/beta chains family. F-type ATPases have 2 components, CF(1) - the catalytic core - and CF(0) - the membrane proton channel. CF(1) has five subunits: alpha(3), beta(3), gamma(1), delta(1), epsilon(1). CF(0) has three main subunits: a(1), b(2) and c(9-12). The alpha and beta chains form an alternating ring which encloses part of the gamma chain. CF(1) is attached to CF(0) by a central stalk formed by the gamma and epsilon chains, while a peripheral stalk is formed by the delta and b chains.

It localises to the cell membrane. The catalysed reaction is ATP + H2O + 4 H(+)(in) = ADP + phosphate + 5 H(+)(out). In terms of biological role, produces ATP from ADP in the presence of a proton gradient across the membrane. The catalytic sites are hosted primarily by the beta subunits. The polypeptide is ATP synthase subunit beta (Streptococcus pneumoniae serotype 19F (strain G54)).